A 257-amino-acid chain; its full sequence is MIEFRNVSKVYPNGTKGLNNINLKIQKGEFVVMVGLSGAGKSTLLRSVNRLHEITEGEIMIEGESITAAKGKGLRRMRRDIGMIFQSFNLVKRSTVLKNVLAGRVGYHSTLRTTLGLFPKEDLELAFQSLKRVNILEKAYARADELSGGQQQRVSIARALAQEAKIILADEPVASLDPLTTKQVLEDLKKINEDFGITTIVNLHSIDLARQYATRIIGLHAGEIVFDGLVEEATDEKFAEIYGDVVQKSELLEVAVK.

The ABC transporter domain maps to 2 to 246 (IEFRNVSKVY…KFAEIYGDVV (245 aa)). ATP is bound at residue 35–42 (GLSGAGKS).

This sequence belongs to the ABC transporter superfamily. Phosphonates importer (TC 3.A.1.9.1) family. As to quaternary structure, the complex is composed of two ATP-binding proteins (PhnC), two transmembrane proteins (PhnE) and a solute-binding protein (PhnD).

It localises to the cell membrane. It catalyses the reaction phosphonate(out) + ATP + H2O = phosphonate(in) + ADP + phosphate + H(+). Functionally, part of the ABC transporter complex PhnCDE involved in phosphonates import. Responsible for energy coupling to the transport system. This Bacillus anthracis protein is Phosphonates import ATP-binding protein PhnC.